Reading from the N-terminus, the 145-residue chain is MNKELLEKCKQKLLEEKAKILERYLEKEETQQRLGEESKEPRDWEDIGQMTYTEELLDNLSNVEIATLREIDYALEKIEKGTYGICERCGEEIPEPRLCAIPWTRYCAKCAEEVERESGTYMPSYGVDMYNPENIQVEREDIGEA.

The segment at 86–110 (CERCGEEIPEPRLCAIPWTRYCAKC) adopts a dksA C4-type zinc-finger fold.

This is an uncharacterized protein from Aquifex aeolicus (strain VF5).